The sequence spans 277 residues: Knob-associated histidine-rich protein (277 aa).

Disordered regions lie at residues 95 to 114 (DGSH…GYGY) and 162 to 277 (SSVN…KKKK). 2 stretches are compositionally biased toward basic and acidic residues: residues 169–190 (KHGD…EGEK) and 211–220 (KDNEDAESVK). Over residues 221-237 (SKKHKSHDCEKKKSKKH) the composition is skewed to basic residues. Basic and acidic residues-rich tracts occupy residues 238–259 (KDNE…GEKH) and 268–277 (KTNEEKKKKK).

Its subcellular location is the secreted. KAHRP might mimick human histidine-rich glycoproteins to anchor host thrombospondin or a parasite analog in a binding complex with the endothelial cell receptor. This Plasmodium falciparum (isolate CDC / Honduras) protein is Knob-associated histidine-rich protein.